We begin with the raw amino-acid sequence, 95 residues long: Cell division protein FtsB (95 aa).

Topologically, residues 1 to 3 (MRL) are cytoplasmic. A helical transmembrane segment spans residues 4–21 (FILILSAILLLFQYDLWF). At 22–95 (GKNGYLDYKE…RIAKENKDNR (74 aa)) the chain is on the periplasmic side. Residues 28–62 (DYKETAEEIAMHKAENTKLSQRNQVVAAEIRDLKD) adopt a coiled-coil conformation.

It belongs to the FtsB family. As to quaternary structure, part of a complex composed of FtsB, FtsL and FtsQ.

The protein resides in the cell inner membrane. Essential cell division protein. May link together the upstream cell division proteins, which are predominantly cytoplasmic, with the downstream cell division proteins, which are predominantly periplasmic. This is Cell division protein FtsB from Mannheimia succiniciproducens (strain KCTC 0769BP / MBEL55E).